The sequence spans 1043 residues: Isoleucine--tRNA ligase (1043 aa).

Positions 49–59 (PFATGLPHYGH) match the 'HIGH' region motif. Positions 592 to 596 (KMSKR) match the 'KMSKS' region motif. An ATP-binding site is contributed by lysine 595.

It belongs to the class-I aminoacyl-tRNA synthetase family. IleS type 2 subfamily. Monomer. It depends on Zn(2+) as a cofactor.

The protein resides in the cytoplasm. It carries out the reaction tRNA(Ile) + L-isoleucine + ATP = L-isoleucyl-tRNA(Ile) + AMP + diphosphate. Its function is as follows. Catalyzes the attachment of isoleucine to tRNA(Ile). As IleRS can inadvertently accommodate and process structurally similar amino acids such as valine, to avoid such errors it has two additional distinct tRNA(Ile)-dependent editing activities. One activity is designated as 'pretransfer' editing and involves the hydrolysis of activated Val-AMP. The other activity is designated 'posttransfer' editing and involves deacylation of mischarged Val-tRNA(Ile). The polypeptide is Isoleucine--tRNA ligase (Chlamydia caviae (strain ATCC VR-813 / DSM 19441 / 03DC25 / GPIC) (Chlamydophila caviae)).